The sequence spans 429 residues: 3-phosphoshikimate 1-carboxyvinyltransferase (429 aa).

Lys-21, Ser-22, and Arg-26 together coordinate 3-phosphoshikimate. A phosphoenolpyruvate-binding site is contributed by Lys-21. The phosphoenolpyruvate site is built by Gly-94 and Arg-122. 4 residues coordinate 3-phosphoshikimate: Ser-167, Gln-169, Asp-315, and Lys-342. Gln-169 contacts phosphoenolpyruvate. The active-site Proton acceptor is Asp-315. Residues Arg-346 and Arg-388 each contribute to the phosphoenolpyruvate site.

This sequence belongs to the EPSP synthase family. As to quaternary structure, monomer.

The protein resides in the cytoplasm. It catalyses the reaction 3-phosphoshikimate + phosphoenolpyruvate = 5-O-(1-carboxyvinyl)-3-phosphoshikimate + phosphate. The protein operates within metabolic intermediate biosynthesis; chorismate biosynthesis; chorismate from D-erythrose 4-phosphate and phosphoenolpyruvate: step 6/7. In terms of biological role, catalyzes the transfer of the enolpyruvyl moiety of phosphoenolpyruvate (PEP) to the 5-hydroxyl of shikimate-3-phosphate (S3P) to produce enolpyruvyl shikimate-3-phosphate and inorganic phosphate. The sequence is that of 3-phosphoshikimate 1-carboxyvinyltransferase from Desulforamulus reducens (strain ATCC BAA-1160 / DSM 100696 / MI-1) (Desulfotomaculum reducens).